The following is a 527-amino-acid chain: GMP synthase [glutamine-hydrolyzing] (527 aa).

Positions S20–T208 constitute a Glutamine amidotransferase type-1 domain. C97 serves as the catalytic Nucleophile. Active-site residues include H182 and E184. The region spanning W209–R402 is the GMPS ATP-PPase domain. S236 to S242 is an ATP binding site.

As to quaternary structure, homodimer.

The catalysed reaction is XMP + L-glutamine + ATP + H2O = GMP + L-glutamate + AMP + diphosphate + 2 H(+). It functions in the pathway purine metabolism; GMP biosynthesis; GMP from XMP (L-Gln route): step 1/1. In terms of biological role, catalyzes the synthesis of GMP from XMP. The polypeptide is GMP synthase [glutamine-hydrolyzing] (Thermomicrobium roseum (strain ATCC 27502 / DSM 5159 / P-2)).